The chain runs to 116 residues: Large ribosomal subunit protein uL18 (116 aa).

The protein belongs to the universal ribosomal protein uL18 family. In terms of assembly, part of the 50S ribosomal subunit; part of the 5S rRNA/L5/L18/L25 subcomplex. Contacts the 5S and 23S rRNAs.

Functionally, this is one of the proteins that bind and probably mediate the attachment of the 5S RNA into the large ribosomal subunit, where it forms part of the central protuberance. In Exiguobacterium sibiricum (strain DSM 17290 / CCUG 55495 / CIP 109462 / JCM 13490 / 255-15), this protein is Large ribosomal subunit protein uL18.